The primary structure comprises 479 residues: MFKNAFSNLQKIGRSLMLPVSVLPIAGILLGIGSANFKIIPHTISNIMTEAGSSVFSNMPLIFAIGIALGFTKNDGVSALAAVVSYGIMTKTLSITIPIFSNLSDINVNQKYLLDTGILGGIIAGSISAYIFNTFYRIQLPEYLGFFAGRRFVPIASGLISIIFGCILSIIWPPIGNVIKTFSEWAAYQNPTLAFGIYGTVERALVPFGLHHIWNVPFQMQIGEYNNSIGQIFHGDIARYMAGDSTAGKLSGGFIFKMYGLPFAALAMWHCANKKNKAKIGGIMMSGALTAILTGITEPIEFSFILVAPILYVIHAILAGLAFPICILLNMRSGTSFSHGLIDFIVLSGNSNNFWLFPIVGLFYGILYYGIFYFMIKKFNLKTPGREKSITYINQKTIKETALLVISILGGKTNIINLDACITRLRITVLDISKVNQKKLKNLGASGVIVSGSGIQIVFGTQSDHIKTEIDNYMSNTNQ.

A PTS EIIC type-1 domain is found at 1–388 (MFKNAFSNLQ…FNLKTPGREK (388 aa)). Helical transmembrane passes span 15–35 (SLML…IGSA), 51–71 (AGSS…ALGF), 80–100 (LAAV…IPIF), 112–132 (YLLD…AYIF), 152–172 (FVPI…SIIW), 252–272 (GGFI…WHCA), 280–300 (IGGI…TEPI), 305–325 (ILVA…AFPI), and 356–376 (LFPI…YFMI). The 81-residue stretch at 399-479 (KETALLVISI…IDNYMSNTNQ (81 aa)) folds into the PTS EIIB type-1 domain. Cys-421 (phosphocysteine intermediate; for EIIB activity) is an active-site residue. Cys-421 carries the post-translational modification Phosphocysteine.

Its subcellular location is the cell inner membrane. The enzyme catalyses N(pros)-phospho-L-histidyl-[protein] + D-glucose(out) = D-glucose 6-phosphate(in) + L-histidyl-[protein]. Functionally, the phosphoenolpyruvate-dependent sugar phosphotransferase system (sugar PTS), a major carbohydrate active transport system, catalyzes the phosphorylation of incoming sugar substrates concomitantly with their translocation across the cell membrane. The enzyme II complex composed of PtsG and Crr is involved in glucose transport. This is PTS system glucose-specific EIICB component (ptsG) from Buchnera aphidicola subsp. Baizongia pistaciae (strain Bp).